The sequence spans 1823 residues: Laminin subunit alpha-4 (1823 aa).

The signal sequence occupies residues 1 to 24 (MALSSAWRSVLPLWLLWSAACSRA). An O-linked (Xyl...) (chondroitin sulfate) serine glycan is attached at serine 39. Intrachain disulfides connect cysteine 82–cysteine 91, cysteine 84–cysteine 98, cysteine 101–cysteine 110, cysteine 113–cysteine 129, cysteine 132–cysteine 146, cysteine 134–cysteine 155, cysteine 157–cysteine 166, cysteine 169–cysteine 184, cysteine 187–cysteine 202, cysteine 189–cysteine 209, cysteine 212–cysteine 221, and cysteine 224–cysteine 238. 3 consecutive Laminin EGF-like domains span residues 82-131 (CDCN…FCQP), 132-186 (CPCP…TCKK), and 187-240 (CDCS…NCAV). N-linked (GlcNAc...) asparagine glycosylation occurs at asparagine 104. Asparagine 215 carries N-linked (GlcNAc...) asparagine glycosylation. A Laminin EGF-like 4; truncated domain is found at 241-255 (CNCGGGPCDSVTGEC). The segment at 256–832 (LEEGFEPPTG…AQTRSVASKI (577 aa)) is domain II and I. N-linked (GlcNAc...) asparagine glycosylation is present at asparagine 315. A coiled-coil region spans residues 320–403 (LLKTKLSERE…KIQEINNKML (84 aa)). N-linked (GlcNAc...) asparagine glycosylation is present at asparagine 465. Positions 473-528 (VVLEQLDDYNAKLSDLQEALDQALNYVRDAEDMNRATAARQRDHEKQQERVREQME) form a coiled coil. Residues asparagine 531, asparagine 557, asparagine 578, asparagine 581, asparagine 638, and asparagine 646 are each glycosylated (N-linked (GlcNAc...) asparagine). Positions 581 to 614 (NLSHDLVQEAIDHAQDLQQEANELSRKLHSSDMN) form a coiled coil. Residues 662-724 (IIYHKDESEN…AVKQLQAAER (63 aa)) adopt a coiled-coil conformation. Positions 724–726 (RGD) match the Cell attachment site motif. N-linked (GlcNAc...) asparagine glycans are attached at residues asparagine 742, asparagine 758, asparagine 761, asparagine 787, and asparagine 810. Residues 777–806 (AVNSARDAVRNLTEVVPQLLDQLRTVEQKR) are a coiled coil. Laminin G-like domains are found at residues 833-1035 (QVSM…SVPC), 1047-1227 (AASY…GYGC), and 1234-1402 (SRRA…LYEC). A disulfide bridge links cysteine 1005 with cysteine 1035. Asparagine 1093 carries N-linked (GlcNAc...) asparagine glycosylation. Cysteine 1201 and cysteine 1227 are disulfide-bonded. N-linked (GlcNAc...) asparagine glycans are attached at residues asparagine 1288 and asparagine 1366. A disulfide bond links cysteine 1370 and cysteine 1402. A glycan (N-linked (GlcNAc...) asparagine) is linked at asparagine 1418. A disordered region spans residues 1419 to 1440 (LSKPKASQNKKGGKSKDAPSWD). 2 Laminin G-like domains span residues 1469-1640 (AYQY…VTPC) and 1647-1820 (TGTY…INSC). 2 cysteine pairs are disulfide-bonded: cysteine 1617-cysteine 1640 and cysteine 1792-cysteine 1820.

As to quaternary structure, laminin is a complex glycoprotein, consisting of three different polypeptide chains (alpha, beta, gamma), which are bound to each other by disulfide bonds into a cross-shaped molecule comprising one long and three short arms with globules at each end. Alpha-4 is a subunit of laminin-8 (laminin-411), laminin-9 (laminin-421) and laminin-14 (laminin-423). In terms of tissue distribution, detected in placenta (at protein level). Detected in fibroblasts and urine (at protein level). In adult, strong expression in heart, lung, ovary small and large intestines, placenta, liver; weak or no expression in skeletal muscle, kidney, pancreas, testis, prostate, brain. High expression in fetal lung and kidney. Expression in fetal and newborn tissues is observed in certain mesenchymal cells in tissues such as smooth muscle and dermis.

The protein resides in the secreted. Its subcellular location is the extracellular space. The protein localises to the extracellular matrix. It localises to the basement membrane. Functionally, binding to cells via a high affinity receptor, laminin is thought to mediate the attachment, migration and organization of cells into tissues during embryonic development by interacting with other extracellular matrix components. This chain is Laminin subunit alpha-4 (LAMA4), found in Homo sapiens (Human).